The chain runs to 304 residues: Ribosomal RNA small subunit methyltransferase H (304 aa).

Residues 50–52 (GGH), Asp-69, Phe-97, Asp-113, and Gln-120 each bind S-adenosyl-L-methionine.

This sequence belongs to the methyltransferase superfamily. RsmH family.

The protein resides in the cytoplasm. It catalyses the reaction cytidine(1402) in 16S rRNA + S-adenosyl-L-methionine = N(4)-methylcytidine(1402) in 16S rRNA + S-adenosyl-L-homocysteine + H(+). Functionally, specifically methylates the N4 position of cytidine in position 1402 (C1402) of 16S rRNA. This chain is Ribosomal RNA small subunit methyltransferase H, found in Rippkaea orientalis (strain PCC 8801 / RF-1) (Cyanothece sp. (strain PCC 8801)).